The primary structure comprises 442 residues: ATP-dependent protease ATPase subunit HslU (442 aa).

Residues I18, 60–65, D255, E320, and R392 contribute to the ATP site; that span reads GVGKTE.

The protein belongs to the ClpX chaperone family. HslU subfamily. A double ring-shaped homohexamer of HslV is capped on each side by a ring-shaped HslU homohexamer. The assembly of the HslU/HslV complex is dependent on binding of ATP.

It localises to the cytoplasm. Its function is as follows. ATPase subunit of a proteasome-like degradation complex; this subunit has chaperone activity. The binding of ATP and its subsequent hydrolysis by HslU are essential for unfolding of protein substrates subsequently hydrolyzed by HslV. HslU recognizes the N-terminal part of its protein substrates and unfolds these before they are guided to HslV for hydrolysis. The protein is ATP-dependent protease ATPase subunit HslU of Aeromonas hydrophila subsp. hydrophila (strain ATCC 7966 / DSM 30187 / BCRC 13018 / CCUG 14551 / JCM 1027 / KCTC 2358 / NCIMB 9240 / NCTC 8049).